The primary structure comprises 415 residues: MPTTIEREFEELDTQRRWQPLYLEIRNESHDYPHRVAKFPENRNRNRYRDVSPYDHSRVKLQNAENDYINASLVDIEEAQRSYILTQGPLPNTCCHFWLMVWQQKTKAVVMLNRIVEKESVKCAQYWPTDDQEMLFKETGFSVKLLSEDVKSYYTVHLLQLENINSGETRTISHFHYTTWPDFGVPESPASFLNFLFKVRESGSLNPDHGPAVIHCSAGIGRSGTFSLVDTCLVLMEKGDDINIKQVLLNMRKYRMGLIQTPDQLRFSYMAIIEGAKCIKGDSSIQKRWKELSKEDLSPAFDHSPNKIMTEKYNGNRIGLEEEKLTGDRCTGLSSKMQDTMEENSESALRKRIREDRKATTAQKVQQMKQRLNENERKRKRWLYWQPILTKMGFMSVILVGAFVGWTLFFQQNAL.

Positions 5-275 (IEREFEELDT…RFSYMAIIEG (271 aa)) constitute a Tyrosine-protein phosphatase domain. Tyr-22 is modified (phosphotyrosine). Position 52 is a phosphoserine (Ser-52). Tyr-68 carries the phosphotyrosine modification. Residues Asp-182, 216 to 222 (CSAGIGR), and Gln-260 each bind substrate. Cys-216 functions as the Phosphocysteine intermediate in the catalytic mechanism. At Cys-216 the chain carries S-nitrosocysteine. Phosphoserine occurs at positions 293, 298, and 304. The endoplasmic reticulum location stretch occupies residues 346–415 (ESALRKRIRE…WTLFFQQNAL (70 aa)). A mediates interaction with STX17 region spans residues 376 to 415 (ERKRKRWLYWQPILTKMGFMSVILVGAFVGWTLFFQQNAL).

It belongs to the protein-tyrosine phosphatase family. Non-receptor class 1 subfamily. Interacts with RMDN3. Isoform 1 interacts with TMED9. Isoform 1 interacts with STX17; dephosphorylates STX17. Interacts with ITGA1 (via cytoplasmic domain); activates the phosphatase activity towards EGFR. Interacts with TRAF2; probably involved in tumor necrosis factor-mediated signaling. Interacts with MET. Interacts with FAM220A and STAT3; interaction with FAM220A promotes interaction of PTPN2 with transcriptional activator STAT3, leading to dephosphorylation of STAT3 by PTPN2 and negative regulation of STAT3 transcriptional activator activity. In terms of processing, specifically phosphorylated in a cell cycle-dependent manner by cyclin-dependent kinases CDK1 and CDK2. Probably activated through phosphorylation by PKR. Ubiquitously expressed. Isoform 2 is probably the major isoform. Isoform 1 is expressed in T-cells and in placenta.

Its subcellular location is the endoplasmic reticulum. It localises to the endoplasmic reticulum-Golgi intermediate compartment. It is found in the nucleus. The protein resides in the cytoplasm. The protein localises to the cell membrane. It catalyses the reaction O-phospho-L-tyrosyl-[protein] + H2O = L-tyrosyl-[protein] + phosphate. Its function is as follows. Non-receptor type tyrosine-specific phosphatase that dephosphorylates receptor protein tyrosine kinases including INSR, EGFR, CSF1R, PDGFR. Also dephosphorylates non-receptor protein tyrosine kinases like JAK1, JAK2, JAK3, Src family kinases, STAT1, STAT3 and STAT6 either in the nucleus or the cytoplasm. Negatively regulates numerous signaling pathways and biological processes like hematopoiesis, inflammatory response, cell proliferation and differentiation, and glucose homeostasis. Plays a multifaceted and important role in the development of the immune system. Functions in T-cell receptor signaling through dephosphorylation of FYN and LCK to control T-cells differentiation and activation. Dephosphorylates CSF1R, negatively regulating its downstream signaling and macrophage differentiation. Negatively regulates cytokine (IL2/interleukin-2 and interferon)-mediated signaling through dephosphorylation of the cytoplasmic kinases JAK1, JAK3 and their substrate STAT1, that propagate signaling downstream of the cytokine receptors. Also regulates the IL6/interleukin-6 and IL4/interleukin-4 cytokine signaling through dephosphorylation of STAT3 and STAT6 respectively. In addition to the immune system, it is involved in anchorage-dependent, negative regulation of EGF-stimulated cell growth. Activated by the integrin ITGA1/ITGB1, it dephosphorylates EGFR and negatively regulates EGF signaling. Dephosphorylates PDGFRB and negatively regulates platelet-derived growth factor receptor-beta signaling pathway and therefore cell proliferation. Negatively regulates tumor necrosis factor-mediated signaling downstream via MAPK through SRC dephosphorylation. May also regulate the hepatocyte growth factor receptor signaling pathway through dephosphorylation of the hepatocyte growth factor receptor MET. Also plays an important role in glucose homeostasis. For instance, negatively regulates the insulin receptor signaling pathway through the dephosphorylation of INSR and control gluconeogenesis and liver glucose production through negative regulation of the IL6 signaling pathways. May also bind DNA. The protein is Tyrosine-protein phosphatase non-receptor type 2 (PTPN2) of Homo sapiens (Human).